A 314-amino-acid polypeptide reads, in one-letter code: Glutathione synthetase (314 aa).

Residues 125–311 (EKIAAQLFPQ…IAGQLFDAIE (187 aa)) enclose the ATP-grasp domain. 151–208 (FVQKQEQAILKPLDGMGGHSIFRSSNGDPNLNVILETLTDGGRTLAIAQRYLQQIIEG) contributes to the ATP binding site. Mg(2+) is bound by residues Glu282 and Asn284.

It belongs to the prokaryotic GSH synthase family. The cofactor is Mg(2+). It depends on Mn(2+) as a cofactor.

The catalysed reaction is gamma-L-glutamyl-L-cysteine + glycine + ATP = glutathione + ADP + phosphate + H(+). Its pathway is sulfur metabolism; glutathione biosynthesis; glutathione from L-cysteine and L-glutamate: step 2/2. The chain is Glutathione synthetase from Xylella fastidiosa (strain Temecula1 / ATCC 700964).